Reading from the N-terminus, the 152-residue chain is Ribonuclease H (152 aa).

An RNase H type-1 domain is found at Ser-4 to Ala-145. Residues Asp-13, Glu-51, Asp-73, and Asp-137 each contribute to the Mg(2+) site.

Belongs to the RNase H family. As to quaternary structure, monomer. It depends on Mg(2+) as a cofactor.

It localises to the cytoplasm. The enzyme catalyses Endonucleolytic cleavage to 5'-phosphomonoester.. Endonuclease that specifically degrades the RNA of RNA-DNA hybrids. The chain is Ribonuclease H from Syntrophotalea carbinolica (strain DSM 2380 / NBRC 103641 / GraBd1) (Pelobacter carbinolicus).